We begin with the raw amino-acid sequence, 498 residues long: Lysine--tRNA ligase (498 aa).

Mg(2+) contacts are provided by E408 and E415.

Belongs to the class-II aminoacyl-tRNA synthetase family. Homodimer. The cofactor is Mg(2+).

It is found in the cytoplasm. The enzyme catalyses tRNA(Lys) + L-lysine + ATP = L-lysyl-tRNA(Lys) + AMP + diphosphate. In Listeria monocytogenes serovar 1/2a (strain ATCC BAA-679 / EGD-e), this protein is Lysine--tRNA ligase.